The primary structure comprises 371 residues: Alanine dehydrogenase (371 aa).

The substrate site is built by arginine 15 and lysine 74. Catalysis depends on histidine 95, which acts as the Proton donor/acceptor. Residues serine 133, 177–178 (QA), aspartate 197, serine 219, 238–239 (VL), 266–269 (IAID), arginine 279, and 298–301 (VANM) contribute to the NAD(+) site. The Proton donor/acceptor role is filled by aspartate 269.

It belongs to the AlaDH/PNT family. Homohexamer. Trimer of dimer.

It carries out the reaction L-alanine + NAD(+) + H2O = pyruvate + NH4(+) + NADH + H(+). Its pathway is amino-acid degradation; L-alanine degradation via dehydrogenase pathway; NH(3) and pyruvate from L-alanine: step 1/1. Functionally, catalyzes the reversible reductive amination of pyruvate to L-alanine. May play a role in cell wall synthesis as L-alanine is an important constituent of the peptidoglycan layer. This chain is Alanine dehydrogenase (ald), found in Staphylococcus saprophyticus subsp. saprophyticus (strain ATCC 15305 / DSM 20229 / NCIMB 8711 / NCTC 7292 / S-41).